A 149-amino-acid polypeptide reads, in one-letter code: UPF0208 membrane protein VFMJ11_0876 (149 aa).

2 helical membrane-spanning segments follow: residues 41–61 and 69–89; these read FAVK…MVFN and AIII…WLGN.

This sequence belongs to the UPF0208 family.

It localises to the cell inner membrane. The sequence is that of UPF0208 membrane protein VFMJ11_0876 from Aliivibrio fischeri (strain MJ11) (Vibrio fischeri).